The chain runs to 232 residues: Chaperone protein CssC (232 aa).

The N-terminal stretch at Met-1–Gly-20 is a signal peptide.

It belongs to the periplasmic pilus chaperone family.

It is found in the periplasm. In terms of biological role, involved in the biogenesis of the CS6 fimbria. The chain is Chaperone protein CssC (cssC) from Escherichia coli.